The sequence spans 231 residues: NAD(+) ADP-ribosyltransferase (231 aa).

The enzyme catalyses NAD(+) + (ADP-D-ribosyl)n-acceptor = nicotinamide + (ADP-D-ribosyl)n+1-acceptor + H(+).. Activity increases up to 5-6 times with Mg(2+) at 50 uM or higher ion concentration. 3-aminobenzamide (3-ABA) inhibits the activity by up to half and nicotinamide to a lesser extent. Zn(2+) inhibits the activity to half-maximal rate but at 500 uM concentration of the ion. Catalyzes auto- and hetero-ADP ribosylation and produces short oligomers by elongating the ADP-ribose chain (up to 6-mer). Binds DNA non-specifically but with high affinity. Forms very stable complexes with circular DNA wherein the circular DNA confers thermostability compared to linear DNA. This is NAD(+) ADP-ribosyltransferase from Saccharolobus solfataricus (Sulfolobus solfataricus).